Reading from the N-terminus, the 509-residue chain is Maturase K (509 aa).

It belongs to the intron maturase 2 family. MatK subfamily.

The protein resides in the plastid. It localises to the chloroplast. In terms of biological role, usually encoded in the trnK tRNA gene intron. Probably assists in splicing its own and other chloroplast group II introns. In Atropa belladonna (Belladonna), this protein is Maturase K.